The chain runs to 484 residues: Cobyric acid synthase (484 aa).

The region spanning 248–435 (VLKVIVPVLP…LHGLFEGSQS (188 aa)) is the GATase cobBQ-type domain. The Nucleophile role is filled by C329. H427 is a catalytic residue.

Belongs to the CobB/CobQ family. CobQ subfamily.

It functions in the pathway cofactor biosynthesis; adenosylcobalamin biosynthesis. In terms of biological role, catalyzes amidations at positions B, D, E, and G on adenosylcobyrinic A,C-diamide. NH(2) groups are provided by glutamine, and one molecule of ATP is hydrogenolyzed for each amidation. This Pseudomonas putida (strain W619) protein is Cobyric acid synthase.